A 255-amino-acid chain; its full sequence is Vitamin B12 import ATP-binding protein BtuD (255 aa).

The ABC transporter domain maps to 2-240; the sequence is MHVKHIALGS…EGLAEVFQTQ (239 aa). An ATP-binding site is contributed by 30 to 37; sequence GPNGSGKS.

This sequence belongs to the ABC transporter superfamily. Vitamin B12 importer (TC 3.A.1.13.1) family. As to quaternary structure, the complex is composed of two ATP-binding proteins (BtuD), two transmembrane proteins (BtuC) and a solute-binding protein (BtuF).

The protein resides in the cell inner membrane. It catalyses the reaction an R-cob(III)alamin(out) + ATP + H2O = an R-cob(III)alamin(in) + ADP + phosphate + H(+). Its function is as follows. Part of the ABC transporter complex BtuCDF involved in vitamin B12 import. Responsible for energy coupling to the transport system. In Vibrio campbellii (strain ATCC BAA-1116), this protein is Vitamin B12 import ATP-binding protein BtuD.